The sequence spans 413 residues: Aspartate aminotransferase, cytoplasmic (413 aa).

The L-aspartate site is built by G39 and W141. S149 carries the phosphoserine modification. Residue N195 coordinates L-aspartate. At K259 the chain carries N6-(pyridoxal phosphate)lysine. R387 is an L-aspartate binding site.

The protein belongs to the class-I pyridoxal-phosphate-dependent aminotransferase family. Homodimer. The cofactor is pyridoxal 5'-phosphate.

It localises to the cytoplasm. It carries out the reaction L-aspartate + 2-oxoglutarate = oxaloacetate + L-glutamate. The enzyme catalyses L-cysteine + 2-oxoglutarate = 2-oxo-3-sulfanylpropanoate + L-glutamate. It catalyses the reaction (2S)-2-aminobutanoate + 2-oxoglutarate = 2-oxobutanoate + L-glutamate. The catalysed reaction is 3-sulfino-L-alanine + 2-oxoglutarate = 3-sulfinopyruvate + L-glutamate. Its function is as follows. Biosynthesis of L-glutamate from L-aspartate or L-cysteine. Important regulator of levels of glutamate, the major excitatory neurotransmitter of the vertebrate central nervous system. Acts as a scavenger of glutamate in brain neuroprotection. The aspartate aminotransferase activity is involved in hepatic glucose synthesis during development and in adipocyte glyceroneogenesis. Using L-cysteine as substrate, regulates levels of mercaptopyruvate, an important source of hydrogen sulfide. Mercaptopyruvate is converted into H(2)S via the action of 3-mercaptopyruvate sulfurtransferase (3MST). Hydrogen sulfide is an important synaptic modulator and neuroprotectant in the brain. In addition, catalyzes (2S)-2-aminobutanoate, a by-product in the cysteine biosynthesis pathway. The chain is Aspartate aminotransferase, cytoplasmic from Homo sapiens (Human).